Here is a 179-residue protein sequence, read N- to C-terminus: Dual-action ribosomal maturation protein DarP (179 aa).

It belongs to the DarP family.

The protein resides in the cytoplasm. In terms of biological role, member of a network of 50S ribosomal subunit biogenesis factors which assembles along the 30S-50S interface, preventing incorrect 23S rRNA structures from forming. Promotes peptidyl transferase center (PTC) maturation. The chain is Dual-action ribosomal maturation protein DarP from Photorhabdus laumondii subsp. laumondii (strain DSM 15139 / CIP 105565 / TT01) (Photorhabdus luminescens subsp. laumondii).